A 345-amino-acid polypeptide reads, in one-letter code: Protein phosphatase 1 regulatory subunit 7 (345 aa).

The segment at 1–53 (MATLSVGEPQEMEVDRRGESEESGDDETKRKSLNGEVDSLQAPSTVPEESPVD) is disordered. The segment covering 13 to 30 (EVDRRGESEESGDDETKR) has biased composition (basic and acidic residues). LRR repeat units follow at residues 62–83 (EEED…EVLL), 84–105 (KAKT…ESLV), 106–127 (SLRE…QALT), 128–149 (ELEQ…DSLT), 150–171 (KVKK…DHLT), 172–193 (SLQM…DSLS), 194–215 (SLES…DGLH), 216–237 (NLTV…QNLV), 238–259 (NLRE…ENNK), 260–281 (KLST…SHLT), and 282–303 (DLKE…DELK). An LRRCT domain is found at 316 to 345 (NPLQKDPQYRRKIMLALPSVRQIDATFIRF).

The protein belongs to the SDS22 family.

Its subcellular location is the nucleus. Its function is as follows. Regulatory subunit of protein phosphatase 1. This is Protein phosphatase 1 regulatory subunit 7 (ppp1r7) from Danio rerio (Zebrafish).